Here is a 44-residue protein sequence, read N- to C-terminus: Diuretic hormone (44 aa).

Valine 44 is subject to Valine amide.

It is found in the secreted. Regulation of fluid secretion. Stimulates primary urine secretion by Malpighian tubules and causes a dose-dependent stimulation of cAMP levels in the tubules. May act as clearance peptide in that it may remove metabolic waste from the hemolymph. The polypeptide is Diuretic hormone (Stomoxys calcitrans (Stable fly)).